The sequence spans 184 residues: Deoxyuridine 5'-triphosphate nucleotidohydrolase (184 aa).

The segment covering 1 to 16 (MPHTQTDAHQNNQENF) has biased composition (polar residues). The tract at residues 1–25 (MPHTQTDAHQNNQENFSSSLISSRP) is disordered. Substrate contacts are provided by residues 96–98 (RSG), Asn109, 113–115 (TID), and Lys123. The interval 165-184 (STKNTVGNRGAGGFGSTGHD) is disordered. Residues 173–184 (RGAGGFGSTGHD) show a composition bias toward gly residues.

The protein belongs to the dUTPase family. Mg(2+) serves as cofactor.

It carries out the reaction dUTP + H2O = dUMP + diphosphate + H(+). It functions in the pathway pyrimidine metabolism; dUMP biosynthesis; dUMP from dCTP (dUTP route): step 2/2. This enzyme is involved in nucleotide metabolism: it produces dUMP, the immediate precursor of thymidine nucleotides and it decreases the intracellular concentration of dUTP so that uracil cannot be incorporated into DNA. This chain is Deoxyuridine 5'-triphosphate nucleotidohydrolase, found in Bartonella henselae (strain ATCC 49882 / DSM 28221 / CCUG 30454 / Houston 1) (Rochalimaea henselae).